A 185-amino-acid chain; its full sequence is MDLLSCTVNDAEIFSLVKKEVLSLNTNDYTTAISLSNRLKINKKKINQQLYKLQKEDTVKMVPSNPPKWFKNYNCDNGEKHDSKLEQKNHIPNHIFSDTVPYKKIINWKDKNPCIVLNEYCQFTCRDWSIDITTSGKSHCPMFTATVIISGIKFKPAIGNTKREAKYNASKITMDEILDSVIIKF.

The region spanning 7 to 73 (TVNDAEIFSL…SNPPKWFKNY (67 aa)) is the Z-binding domain. The DRBM domain occupies 112–179 (NPCIVLNEYC…SKITMDEILD (68 aa)).

The protein belongs to the poxviridae E3 protein family.

Functionally, RNA-binding protein that plays a role in the inhibition of multiple cellular antiviral responses activated by double-stranded RNA (dsRNA), such as inhibition of PKR activation, necroptosis, and IFN-mediated antiviral activities. Recognizes and binds Z-RNA structures via its Z-binding domain and dsRNA via its DRBM domain: RNA-binding activity is required to escape host ZBP1-dependent necroptosis. Mechanistically, the Z-binding domain binds Z-RNAs that are produced during Yaba-like disease virus infection, thereby competing with Z-RNA detection by host ZBP1, suppressing ZBP1-dependent necroptosis. The polypeptide is Protein E3 homolog (Yaba-like disease virus (YLDV)).